The following is a 260-amino-acid chain: MSRREDGRLDDELRPVTITRGFTTHPAGSVLVEFGETRVMCTASVTEGVPRWRKGSGQGWLTAEYAMLPAATHDRSDRESVKGRVGGRTQEISRLVGRSLRACIDLAALGENTIAIDCDVLQADGGTRTAAITGAFVALSDAVTYLGAAGKLSDPRPLSCAIAAVSVGVVDGRVRVDLPYTEDSRAEVDMNVVATDTGTLVEIQGTGEGATFPRSTLDKMLDAAMAACDQLFEIQRAALELPYPGTLPESAEPAKKAFGS.

Residues arginine 88 and 126 to 128 each bind phosphate; that span reads GTR.

It belongs to the RNase PH family. As to quaternary structure, homohexameric ring arranged as a trimer of dimers.

It catalyses the reaction tRNA(n+1) + phosphate = tRNA(n) + a ribonucleoside 5'-diphosphate. In terms of biological role, phosphorolytic 3'-5' exoribonuclease that plays an important role in tRNA 3'-end maturation. Removes nucleotide residues following the 3'-CCA terminus of tRNAs; can also add nucleotides to the ends of RNA molecules by using nucleoside diphosphates as substrates, but this may not be physiologically important. Probably plays a role in initiation of 16S rRNA degradation (leading to ribosome degradation) during starvation. This Mycolicibacterium gilvum (strain PYR-GCK) (Mycobacterium gilvum (strain PYR-GCK)) protein is Ribonuclease PH.